Consider the following 164-residue polypeptide: Lipoprotein signal peptidase (164 aa).

The next 3 helical transmembrane spans lie at 12–32 (WLWL…LILQ), 70–90 (WFFA…MYRS), and 102–122 (ALII…GFVV). Catalysis depends on residues aspartate 123 and aspartate 141. Residues 137–157 (FNLADTAICVGAALIVLEGFL) form a helical membrane-spanning segment.

It belongs to the peptidase A8 family.

Its subcellular location is the cell inner membrane. The enzyme catalyses Release of signal peptides from bacterial membrane prolipoproteins. Hydrolyzes -Xaa-Yaa-Zaa-|-(S,diacylglyceryl)Cys-, in which Xaa is hydrophobic (preferably Leu), and Yaa (Ala or Ser) and Zaa (Gly or Ala) have small, neutral side chains.. The protein operates within protein modification; lipoprotein biosynthesis (signal peptide cleavage). This protein specifically catalyzes the removal of signal peptides from prolipoproteins. In Escherichia coli O9:H4 (strain HS), this protein is Lipoprotein signal peptidase.